Reading from the N-terminus, the 456-residue chain is Exodeoxyribonuclease 7 large subunit (456 aa).

It belongs to the XseA family. Heterooligomer composed of large and small subunits.

Its subcellular location is the cytoplasm. The enzyme catalyses Exonucleolytic cleavage in either 5'- to 3'- or 3'- to 5'-direction to yield nucleoside 5'-phosphates.. Functionally, bidirectionally degrades single-stranded DNA into large acid-insoluble oligonucleotides, which are then degraded further into small acid-soluble oligonucleotides. The protein is Exodeoxyribonuclease 7 large subunit of Lactobacillus johnsonii (strain CNCM I-12250 / La1 / NCC 533).